The primary structure comprises 575 residues: DNA-directed RNA polymerase subunit beta' (575 aa).

Positions 64, 66, 85, and 88 each coordinate Zn(2+). 3 residues coordinate Mg(2+): Asp-440, Asp-442, and Asp-444.

The protein belongs to the RNA polymerase beta' chain family. RpoC1 subfamily. As to quaternary structure, in plastids the minimal PEP RNA polymerase catalytic core is composed of four subunits: alpha, beta, beta', and beta''. When a (nuclear-encoded) sigma factor is associated with the core the holoenzyme is formed, which can initiate transcription. Mg(2+) is required as a cofactor. It depends on Zn(2+) as a cofactor.

The protein localises to the plastid. It catalyses the reaction RNA(n) + a ribonucleoside 5'-triphosphate = RNA(n+1) + diphosphate. Its function is as follows. DNA-dependent RNA polymerase catalyzes the transcription of DNA into RNA using the four ribonucleoside triphosphates as substrates. The polypeptide is DNA-directed RNA polymerase subunit beta' (Euglena longa (Euglenophycean alga)).